The following is a 177-amino-acid chain: Ferritin heavy chain, oocyte isoform (177 aa).

One can recognise a Ferritin-like diiron domain in the interval Gln-7–Gly-156. Fe cation-binding residues include Glu-24, Glu-59, His-62, Glu-104, and Gln-138.

Belongs to the ferritin family. Oligomer of 24 subunits. There are two types of subunits: L (light) chain and H (heavy) chain. The functional molecule is roughly spherical and contains a central cavity into which the insoluble mineral iron core is deposited.

The protein localises to the cytoplasm. It catalyses the reaction 4 Fe(2+) + O2 + 4 H(+) = 4 Fe(3+) + 2 H2O. Its function is as follows. Stores iron in a soluble, non-toxic, readily available form. Important for iron homeostasis. Has ferroxidase activity. Iron is taken up in the ferrous form and deposited as ferric hydroxides after oxidation. In Xenopus laevis (African clawed frog), this protein is Ferritin heavy chain, oocyte isoform.